The chain runs to 320 residues: Lipoyl synthase (320 aa).

The segment at 1 to 28 (MVTVVDRVTDRRLRHPEKAHRPDTSVQK) is disordered. The span at 19–28 (AHRPDTSVQK) shows a compositional bias: basic and acidic residues. Positions 59, 64, 70, 85, 89, 92, and 298 each coordinate [4Fe-4S] cluster. In terms of domain architecture, Radical SAM core spans 71 to 287 (WSQRHASFMI…AKIGKVKGFL (217 aa)).

This sequence belongs to the radical SAM superfamily. Lipoyl synthase family. It depends on [4Fe-4S] cluster as a cofactor.

It is found in the cytoplasm. The catalysed reaction is [[Fe-S] cluster scaffold protein carrying a second [4Fe-4S](2+) cluster] + N(6)-octanoyl-L-lysyl-[protein] + 2 oxidized [2Fe-2S]-[ferredoxin] + 2 S-adenosyl-L-methionine + 4 H(+) = [[Fe-S] cluster scaffold protein] + N(6)-[(R)-dihydrolipoyl]-L-lysyl-[protein] + 4 Fe(3+) + 2 hydrogen sulfide + 2 5'-deoxyadenosine + 2 L-methionine + 2 reduced [2Fe-2S]-[ferredoxin]. The protein operates within protein modification; protein lipoylation via endogenous pathway; protein N(6)-(lipoyl)lysine from octanoyl-[acyl-carrier-protein]: step 2/2. Functionally, catalyzes the radical-mediated insertion of two sulfur atoms into the C-6 and C-8 positions of the octanoyl moiety bound to the lipoyl domains of lipoate-dependent enzymes, thereby converting the octanoylated domains into lipoylated derivatives. The protein is Lipoyl synthase of Bartonella henselae (strain ATCC 49882 / DSM 28221 / CCUG 30454 / Houston 1) (Rochalimaea henselae).